The chain runs to 954 residues: Glycine dehydrogenase (decarboxylating) (954 aa).

K704 bears the N6-(pyridoxal phosphate)lysine mark.

It belongs to the GcvP family. As to quaternary structure, the glycine cleavage system is composed of four proteins: P, T, L and H. The cofactor is pyridoxal 5'-phosphate.

The catalysed reaction is N(6)-[(R)-lipoyl]-L-lysyl-[glycine-cleavage complex H protein] + glycine + H(+) = N(6)-[(R)-S(8)-aminomethyldihydrolipoyl]-L-lysyl-[glycine-cleavage complex H protein] + CO2. The glycine cleavage system catalyzes the degradation of glycine. The P protein binds the alpha-amino group of glycine through its pyridoxal phosphate cofactor; CO(2) is released and the remaining methylamine moiety is then transferred to the lipoamide cofactor of the H protein. In Rhizobium leguminosarum bv. trifolii (strain WSM2304), this protein is Glycine dehydrogenase (decarboxylating).